The chain runs to 314 residues: Homoserine kinase (314 aa).

An ATP-binding site is contributed by 97-107 (PPARGMGSSAT).

It belongs to the GHMP kinase family. Homoserine kinase subfamily.

The protein resides in the cytoplasm. It catalyses the reaction L-homoserine + ATP = O-phospho-L-homoserine + ADP + H(+). It functions in the pathway amino-acid biosynthesis; L-threonine biosynthesis; L-threonine from L-aspartate: step 4/5. Catalyzes the ATP-dependent phosphorylation of L-homoserine to L-homoserine phosphate. This is Homoserine kinase from Synechococcus sp. (strain RCC307).